A 1393-amino-acid chain; its full sequence is DNA-directed RNA polymerase subunit beta'' (1393 aa).

Zn(2+)-binding residues include Cys-224, Cys-295, Cys-302, and Cys-305.

Belongs to the RNA polymerase beta' chain family. RpoC2 subfamily. In plastids the minimal PEP RNA polymerase catalytic core is composed of four subunits: alpha, beta, beta', and beta''. When a (nuclear-encoded) sigma factor is associated with the core the holoenzyme is formed, which can initiate transcription. Requires Zn(2+) as cofactor.

It localises to the plastid. The protein localises to the chloroplast. It carries out the reaction RNA(n) + a ribonucleoside 5'-triphosphate = RNA(n+1) + diphosphate. In terms of biological role, DNA-dependent RNA polymerase catalyzes the transcription of DNA into RNA using the four ribonucleoside triphosphates as substrates. This chain is DNA-directed RNA polymerase subunit beta'', found in Manihot esculenta (Cassava).